The following is a 734-amino-acid chain: Diacylglycerol kinase alpha (734 aa).

EF-hand domains lie at 109–144 (RPEDKLEFTFKLYDTDRNGILDSSEVDRIIIQMMRM) and 154–189 (ELRPILQEMMKEIDYDGSGSVSLAEWLRAGATTVPL). Positions 122, 124, 126, 133, 167, 169, 171, 173, and 178 each coordinate Ca(2+). 2 consecutive Phorbol-ester/DAG-type zinc fingers follow at residues 204 to 252 (QHMW…ALPC) and 268 to 318 (SHVW…GHEC). The DAGKc domain occupies 371 to 505 (SNTHPLLVFV…MDRWSVEVIP (135 aa)). The residue at position 483 (lysine 483) is an N6-acetyllysine.

Belongs to the eukaryotic diacylglycerol kinase family. Monomer.

It is found in the cytoplasm. Its subcellular location is the cytosol. The enzyme catalyses a 1,2-diacyl-sn-glycerol + ATP = a 1,2-diacyl-sn-glycero-3-phosphate + ADP + H(+). It catalyses the reaction a 1-O-alkyl-sn-glycerol + ATP = a 1-O-alkyl-sn-glycero-3-phosphate + ADP + H(+). It carries out the reaction 1-O-alkyl-2-acyl-sn-glycerol + ATP = 1-O-alkyl-2-acyl-sn-glycero-3-phosphate + ADP + H(+). The catalysed reaction is 1,2-dihexadecanoyl-sn-glycerol + ATP = 1,2-dihexadecanoyl-sn-glycero-3-phosphate + ADP + H(+). The enzyme catalyses 1-hexadecanoyl-2-(9Z-octadecenoyl)-sn-glycerol + ATP = 1-hexadecanoyl-2-(9Z-octadecenoyl)-sn-glycero-3-phosphate + ADP + H(+). It catalyses the reaction 2-(9Z-octadecenoyl)-glycerol + ATP = 2-(9Z-octadecenoyl)-sn-glycero-3-phosphate + ADP + H(+). It carries out the reaction 1,2-di-(9Z-octadecenoyl)-sn-glycerol + ATP = 1,2-di-(9Z-octadecenoyl)-sn-glycero-3-phosphate + ADP + H(+). The catalysed reaction is 1-octadecanoyl-2-(5Z,8Z,11Z,14Z-eicosatetraenoyl)-sn-glycerol + ATP = 1-octadecanoyl-2-(5Z,8Z,11Z,14Z-eicosatetraenoyl)-sn-glycero-3-phosphate + ADP + H(+). The enzyme catalyses 1,2-didecanoyl-sn-glycerol + ATP = 1,2-didecanoyl-sn-glycero-3-phosphate + ADP + H(+). It catalyses the reaction 1-O-hexadecyl-2-acetyl-sn-glycerol + ATP = 1-O-hexadecyl-2-acetyl-sn-glycero-3-phosphate + ADP + H(+). It carries out the reaction 1-O-hexadecyl-2-(5Z,8Z,11Z,14Z-eicosatetraenoyl)-sn-glycerol + ATP = 1-O-hexadecyl-2-(5Z,8Z,11Z,14Z-eicosatetraenoyl)-sn-glycero-3-phosphate + ADP + H(+). The catalysed reaction is 1-O-hexadecyl-2-(9Z-octadecenoyl)-sn-glycerol + ATP = 1-O-hexadecyl-2-(9Z-octadecenoyl)-sn-glycero-3-phosphate + ADP + H(+). The enzyme catalyses 1-O-hexadecyl-sn-glycerol + ATP = 1-O-hexadecyl-sn-glycero-3-phosphate + ADP + H(+). It participates in lipid metabolism; glycerolipid metabolism. Its activity is regulated as follows. Stimulated by calcium and phosphatidylserine. Diacylglycerol kinase that converts diacylglycerol/DAG into phosphatidic acid/phosphatidate/PA and regulates the respective levels of these two bioactive lipids. Thereby, acts as a central switch between the signaling pathways activated by these second messengers with different cellular targets and opposite effects in numerous biological processes. Also plays an important role in the biosynthesis of complex lipids. Can also phosphorylate 1-alkyl-2-acylglycerol in vitro as efficiently as diacylglycerol provided it contains an arachidonoyl group. Also involved in the production of alkyl-lysophosphatidic acid, another bioactive lipid, through the phosphorylation of 1-alkyl-2-acetyl glycerol. The polypeptide is Diacylglycerol kinase alpha (DGKA) (Bos taurus (Bovine)).